The chain runs to 193 residues: Large ribosomal subunit protein uL5 (193 aa).

The protein belongs to the universal ribosomal protein uL5 family. Part of the 50S ribosomal subunit; part of the 5S rRNA/L5/L18/L25 subcomplex. Contacts the 5S rRNA and the P site tRNA. Forms a bridge to the 30S subunit in the 70S ribosome.

This is one of the proteins that bind and probably mediate the attachment of the 5S RNA into the large ribosomal subunit, where it forms part of the central protuberance. In the 70S ribosome it contacts protein S13 of the 30S subunit (bridge B1b), connecting the 2 subunits; this bridge is implicated in subunit movement. Contacts the P site tRNA; the 5S rRNA and some of its associated proteins might help stabilize positioning of ribosome-bound tRNAs. In Pseudarthrobacter chlorophenolicus (strain ATCC 700700 / DSM 12829 / CIP 107037 / JCM 12360 / KCTC 9906 / NCIMB 13794 / A6) (Arthrobacter chlorophenolicus), this protein is Large ribosomal subunit protein uL5.